Here is a 139-residue protein sequence, read N- to C-terminus: 10 kDa chaperonin 2, chloroplastic (139 aa).

The N-terminal 39 residues, 1–39 (MASTFVCSLPNPFFAFPVKATTPSTANHTLLGSRRGCLR), are a transit peptide targeting the chloroplast. The cpn-10 domain stretch occupies residues 51–138 (KVVPQADRVL…CKESDLLALV (88 aa)).

The protein belongs to the GroES chaperonin family. Expressed in leaves and stems. Expressed at low levels in germinating seeds, seedlings, rosettes leaves, flowers and siliques.

It localises to the plastid. The protein localises to the chloroplast stroma. Its function is as follows. Functions as a co-chaperone for protein folding in chloroplasts. The protein is 10 kDa chaperonin 2, chloroplastic of Arabidopsis thaliana (Mouse-ear cress).